Here is a 129-residue protein sequence, read N- to C-terminus: Translation initiation factor 5A (129 aa).

Position 36 is a hypusine (Lys-36).

The protein belongs to the eIF-5A family.

The protein localises to the cytoplasm. In terms of biological role, functions by promoting the formation of the first peptide bond. This chain is Translation initiation factor 5A (eif5a), found in Thermoplasma acidophilum (strain ATCC 25905 / DSM 1728 / JCM 9062 / NBRC 15155 / AMRC-C165).